The sequence spans 163 residues: Nucleotide-binding protein Noca_0564 (163 aa).

Belongs to the YajQ family.

In terms of biological role, nucleotide-binding protein. This chain is Nucleotide-binding protein Noca_0564, found in Nocardioides sp. (strain ATCC BAA-499 / JS614).